The sequence spans 414 residues: ZP domain-containing protein (414 aa).

Positions methionine 1–alanine 17 are cleaved as a signal peptide. The tract at residues glutamine 18–aspartate 65 is disordered. At glutamine 18–threonine 364 the chain is on the extracellular side. Low complexity predominate over residues proline 39–proline 57. The ZP domain occupies isoleucine 70–serine 323. Cysteine 241 and cysteine 302 are oxidised to a cystine. A helical membrane pass occupies residues isoleucine 365–valine 385. The Cytoplasmic segment spans residues methionine 386–valine 414.

As to expression, component of the acid-insoluble and acid-soluble organic matrix of the aragonitic skeleton (at protein level).

Its subcellular location is the membrane. This chain is ZP domain-containing protein, found in Acropora millepora (Staghorn coral).